Consider the following 539-residue polypeptide: Chaperonin GroEL (539 aa).

ATP contacts are provided by residues 30-33, K51, 87-91, G415, and D495; these read TLGP and DGTTT.

Belongs to the chaperonin (HSP60) family. Forms a cylinder of 14 subunits composed of two heptameric rings stacked back-to-back. Interacts with the co-chaperonin GroES.

It localises to the cytoplasm. The catalysed reaction is ATP + H2O + a folded polypeptide = ADP + phosphate + an unfolded polypeptide.. In terms of biological role, together with its co-chaperonin GroES, plays an essential role in assisting protein folding. The GroEL-GroES system forms a nano-cage that allows encapsulation of the non-native substrate proteins and provides a physical environment optimized to promote and accelerate protein folding. This is Chaperonin GroEL from Serratia rubidaea (Serratia marinorubra).